The primary structure comprises 166 residues: MKNIYLVGFMGSGKSTVGKILAEKLNMKFVDIDKLIEEKEGMKIKDIFEQKGESYFRELERKQIEAIVNQEGLVVSTGGGLGANLNNMNLMKKNGDVVWLDVSLNTVLDRLKNDQDRPLLKQPIEKIKQLFEERKNVYRLANIRINADKKTPSQIVEEILTKIKRR.

Position 11-16 (11-16 (GSGKST)) interacts with ATP. S15 lines the Mg(2+) pocket. 3 residues coordinate substrate: D33, R57, and G79. R117 is an ATP binding site. A substrate-binding site is contributed by R134.

Belongs to the shikimate kinase family. In terms of assembly, monomer. The cofactor is Mg(2+).

It is found in the cytoplasm. It carries out the reaction shikimate + ATP = 3-phosphoshikimate + ADP + H(+). It participates in metabolic intermediate biosynthesis; chorismate biosynthesis; chorismate from D-erythrose 4-phosphate and phosphoenolpyruvate: step 5/7. Catalyzes the specific phosphorylation of the 3-hydroxyl group of shikimic acid using ATP as a cosubstrate. This is Shikimate kinase from Sulfurihydrogenibium sp. (strain YO3AOP1).